We begin with the raw amino-acid sequence, 158 residues long: Urease accessory protein UreE (158 aa).

This sequence belongs to the UreE family.

The protein resides in the cytoplasm. Functionally, involved in urease metallocenter assembly. Binds nickel. Probably functions as a nickel donor during metallocenter assembly. The chain is Urease accessory protein UreE from Microcystis aeruginosa (strain NIES-843 / IAM M-2473).